We begin with the raw amino-acid sequence, 357 residues long: D(4) dopamine receptor (357 aa).

Residues 1-32 (MGNRSAADADGLLAGRGPGTGGGAGSPGAAAA) are Extracellular-facing. Asn-3 is a glycosylation site (N-linked (GlcNAc...) asparagine). A helical membrane pass occupies residues 33–55 (LVGGVLLIGAVLAGNALVCVSVA). At 56–65 (AERALQTPTN) the chain is on the cytoplasmic side. Residues 66-88 (YFIVSLAAADLLLALLVLPLFVY) form a helical membrane-spanning segment. Asp-75 is a Na(+) binding site. The Extracellular portion of the chain corresponds to 89–104 (SEVQGGVWQFSPGLCD). Cys-103 and Cys-180 form a disulfide bridge. Residues 105-126 (ALMAMDVMLCTASIFNLCAISA) traverse the membrane as a helical segment. Ser-117 serves as a coordination point for Na(+). Topologically, residues 127–146 (DRFVAVAVPLSYNRQSGGGR) are cytoplasmic. A helical membrane pass occupies residues 147 to 170 (QLLLIGATWLLSAAVAAPVLCGLN). Residues 171–186 (DARGRDPAVCRLEDRD) lie on the Extracellular side of the membrane. Residues 187-208 (YVVYSSVCSFFLPCPVMLLLYW) traverse the membrane as a helical segment. Topologically, residues 209 to 284 (ATFRGLRRWE…ITGRERKAMR (76 aa)) are cytoplasmic. The segment at 225–261 (LHGRRPRRPSGPGPPPPEAVETPEAPEAIPTPDATLA) is disordered. Pro residues predominate over residues 233-242 (PSGPGPPPPE). The segment covering 243 to 259 (AVETPEAPEAIPTPDAT) has biased composition (low complexity). Residues 285–307 (VLPVVVGAFLVCWTPFFVVHITG) form a helical membrane-spanning segment. Over 308 to 316 (ALCPACAVP) the chain is Extracellular. A disulfide bridge connects residues Cys-310 and Cys-313. Residues 317 to 339 (PRLVSAVTWLGYVNSALNPLIYT) form a helical membrane-spanning segment. Residues 340–357 (VFNAEFRAVFRKALRLCC) lie on the Cytoplasmic side of the membrane. The S-palmitoyl cysteine moiety is linked to residue Cys-357.

The protein belongs to the G-protein coupled receptor 1 family. As to quaternary structure, forms homo- and heterooligomers with DRD2. D4.7 allele exhibits higher affinity for homodimers compared to DRD2 heterodimers, while alleles D42. and 4.4 have similar affinities for both. The interaction with DRD2 may modulate agonist-induced downstream signaling. Interacts with CLIC6. Interacts with GPRASP1. May interact with ADORA2A. Interacts with KLHL12. Polyubiquitinated by the BCR(KLHL12) E3 ubiquitin ligase complex: polyubiquitination does not lead to degradation of DRD4 protein. In terms of processing, palmitoylated. Palmitoylation of the C-terminal Cys is important for normal expression at the cell membrane.

It is found in the cell membrane. Dopamine receptor responsible for neuronal signaling in the mesolimbic system of the brain, an area of the brain that regulates emotion and complex behavior. Activated by dopamine, but also by epinephrine and norepinephrine, and by numerous synthetic agonists and drugs. Agonist binding triggers signaling via G proteins that inhibit adenylyl cyclase. Modulates the circadian rhythm of contrast sensitivity by regulating the rhythmic expression of NPAS2 in the retinal ganglion cells. This is D(4) dopamine receptor (DRD4) from Mustela putorius furo (European domestic ferret).